A 264-amino-acid polypeptide reads, in one-letter code: Chanoclavine-I dehydrogenase easD (264 aa).

An N-terminal signal peptide occupies residues 1-20; the sequence is MASVSSKIFAITGGASGIGA. NADP(+) contacts are provided by isoleucine 18, aspartate 66, arginine 132, tyrosine 169, lysine 173, and threonine 204. Tyrosine 169 functions as the Proton donor in the catalytic mechanism. The active-site Lowers pKa of active site Tyr is lysine 173.

Belongs to the short-chain dehydrogenases/reductases (SDR) family. As to quaternary structure, homotetramer.

It catalyses the reaction chanoclavine-I + NAD(+) = chanoclavine-I aldehyde + NADH + H(+). Its pathway is alkaloid biosynthesis; ergot alkaloid biosynthesis. Chanoclavine-I dehydrogenase; part of the gene cluster that mediates the biosynthesis of fungal ergot alkaloid. DmaW catalyzes the first step of ergot alkaloid biosynthesis by condensing dimethylallyl diphosphate (DMAP) and tryptophan to form 4-dimethylallyl-L-tryptophan. The second step is catalyzed by the methyltransferase easF that methylates 4-dimethylallyl-L-tryptophan in the presence of S-adenosyl-L-methionine, resulting in the formation of 4-dimethylallyl-L-abrine. The catalase easC and the FAD-dependent oxidoreductase easE then transform 4-dimethylallyl-L-abrine to chanoclavine-I which is further oxidized by easD in the presence of NAD(+), resulting in the formation of chanoclavine-I aldehyde. Chanoclavine-I aldehyde is the precursor of ergoamides and ergopeptines in Clavicipitaceae, and clavine-type alcaloids such as fumiclavine in Trichocomaceae. However, the metabolites downstream of chanoclavine-I aldehyde in Arthrodermataceae have not been identified yet. In Arthroderma otae (strain ATCC MYA-4605 / CBS 113480) (Microsporum canis), this protein is Chanoclavine-I dehydrogenase easD.